Reading from the N-terminus, the 204-residue chain is MKETRSKQPDITPDMLLRAYSIGLFPMADSADDPELFWVEPEIRGIIPLDRFHVSRSLAKVIRRRPFDIRFDTAFSEVIEGCAQRAPDRPTTWINDTIRALYAALHKMGHAHSVEAWEGDTLVGGLYGVSLGAAFFGESMFSRRTDASKICLVHLVQRLRSKGFQLLDTQFTTEHLKSFGAVDVPKVEYEVLLAKAIASPNLDF.

This sequence belongs to the L/F-transferase family.

Its subcellular location is the cytoplasm. It carries out the reaction N-terminal L-lysyl-[protein] + L-leucyl-tRNA(Leu) = N-terminal L-leucyl-L-lysyl-[protein] + tRNA(Leu) + H(+). It catalyses the reaction N-terminal L-arginyl-[protein] + L-leucyl-tRNA(Leu) = N-terminal L-leucyl-L-arginyl-[protein] + tRNA(Leu) + H(+). The enzyme catalyses L-phenylalanyl-tRNA(Phe) + an N-terminal L-alpha-aminoacyl-[protein] = an N-terminal L-phenylalanyl-L-alpha-aminoacyl-[protein] + tRNA(Phe). Functions in the N-end rule pathway of protein degradation where it conjugates Leu, Phe and, less efficiently, Met from aminoacyl-tRNAs to the N-termini of proteins containing an N-terminal arginine or lysine. The protein is Leucyl/phenylalanyl-tRNA--protein transferase of Sinorhizobium medicae (strain WSM419) (Ensifer medicae).